The chain runs to 494 residues: Leucine-rich repeat extensin-like protein 4 (494 aa).

Positions 1–25 (MKNNTTQSLLLLLLFFFFFFEISHS) are cleaved as a signal peptide. 3 N-linked (GlcNAc...) asparagine glycosylation sites follow: Asn60, Asn94, and Asn106. LRR repeat units lie at residues 121–145 (IRTVAGIDLNHADIAGYLPEELGLL), 146–168 (TDLALFHVNSNRFCGTVPHKFKQ), 169–193 (LKLLFELDLSNNRFAGKFPTVVLHL), 194–217 (PSLKFLDLRFNEFEGTVPKELFSK), 219–240 (LDAIFINHNRFRFELPENFGDS), 242–263 (VSVIVLANNHFHGCIPTSLVEM), 264–287 (KNLNEIIFMNNGLNSCLPADIGRL), 289–311 (NVTVFDVSFNELVGPLPESVGGM), and 312–335 (VEVEQLNVAHNLLSGKIPASICQL). Asn289 carries an N-linked (GlcNAc...) asparagine glycan. Asn340 carries an N-linked (GlcNAc...) asparagine glycan. The tract at residues 404-494 (SPPIVALPPP…YASPPPPPFY (91 aa)) is contains the Ser-Pro(4) repeats. Over residues 422–479 (PPVYSPPPSPPVFSPPPSPPVYSPPPPPSIHYSSPPPPPVHHSSPPPPSPEFEGPLPP) the composition is skewed to pro residues. The segment at 422-482 (PPVYSPPPSP…FEGPLPPVIG (61 aa)) is disordered.

Hydroxylated on proline residues in the S-P-P-P-P repeat. Post-translationally, O-glycosylated on hydroxyprolines. Expressed in roots, stems, leaves and flowers, mostly in vascular tissues.

The protein resides in the secreted. Its subcellular location is the cell wall. Its function is as follows. Modulates cell morphogenesis by regulating cell wall formation and assembly, and/or growth polarization. In Arabidopsis thaliana (Mouse-ear cress), this protein is Leucine-rich repeat extensin-like protein 4 (LRX4).